We begin with the raw amino-acid sequence, 593 residues long: Maternal uncoordinated protein 2 (593 aa).

This sequence belongs to the SCC4/mau-2 family. In terms of assembly, may heterodimerize with scc-2/SCC2 to form the cohesin loading complex.

Its subcellular location is the nucleus. It localises to the nucleoplasm. It is found in the cytoplasm. In terms of biological role, plays an important role in the loading of the cohesin complex on to DNA. Forms a heterodimeric complex (also known as cohesin loading complex) with scc-2/SCC2 which mediates the loading of the cohesin complex onto chromatin. Required for normal development until the fourth larval stage. Functions cell autonomously to guide migrations during the development of the nervous system. Participates in the guidance of mechanosensory neuron AVM by a slt-1-independent mechanism. Regulates chromosome segregation in early embryos. The protein is Maternal uncoordinated protein 2 of Caenorhabditis elegans.